The sequence spans 283 residues: Zinc import ATP-binding protein ZnuC (283 aa).

Positions 13–228 (VEMRNAGVHR…PEYVRLFGAR (216 aa)) constitute an ABC transporter domain. 45–52 (GPNGSGKS) serves as a coordination point for ATP. Residues 264 to 283 (HHHDHARDGGQGGGGHGHAG) are disordered. Residues 272 to 283 (GGQGGGGHGHAG) show a composition bias toward gly residues.

It belongs to the ABC transporter superfamily. Zinc importer (TC 3.A.1.15.5) family. The complex is composed of two ATP-binding proteins (ZnuC), two transmembrane proteins (ZnuB) and a solute-binding protein (ZnuA).

The protein resides in the cell inner membrane. It catalyses the reaction Zn(2+)(out) + ATP(in) + H2O(in) = Zn(2+)(in) + ADP(in) + phosphate(in) + H(+)(in). Part of the ABC transporter complex ZnuABC involved in zinc import. Responsible for energy coupling to the transport system. The protein is Zinc import ATP-binding protein ZnuC of Chelativorans sp. (strain BNC1).